The primary structure comprises 531 residues: Inactive beta-amylase 4, chloroplastic (531 aa).

A chloroplast-targeting transit peptide spans 1–62 (MTETGVIGCG…KRGRFITKLR (62 aa)).

Belongs to the glycosyl hydrolase 14 family. As to expression, preferentially expressed in vascular tissue of cotyledons, leaves, petioles, stems, petals, siliques and roots, particularly in phloem. Also present in root tip.

The protein resides in the plastid. It is found in the chloroplast. In terms of biological role, no alpha-1,4-glucan hydrolase activity, including beta-amylase, alpha-amylase, a-glucosidase or alpha-amyloglucosidase. However, facilitates or regulates starch breakdown, especially at night, by a mechanism involving direct interaction with starch or other alpha-1,4-glucan. The chain is Inactive beta-amylase 4, chloroplastic (BAM4) from Arabidopsis thaliana (Mouse-ear cress).